The following is a 310-amino-acid chain: Transcription initiation factor IIA subunit 1 (310 aa).

Disordered stretches follow at residues 52–78 (AISN…LSTV), 91–197 (IQLN…NNKD), and 218–261 (VIPQ…DDPD). Low complexity-rich tracts occupy residues 62–77 (TTAT…TLST) and 122–160 (SNGT…PSSL). Composition is skewed to acidic residues over residues 173 to 183 (TLDESDNDDDN), 225 to 236 (LNDDDDLDDEEI), and 246 to 261 (DSLG…DDPD).

The protein belongs to the TFIIA subunit 1 family. As to quaternary structure, TFIIA is a heterodimer of the large subunit 1 and a small subunit gamma.

Its subcellular location is the nucleus. Its function is as follows. TFIIA is a component of the transcription machinery of RNA polymerase II and plays an important role in transcriptional activation. TFIIA in a complex with tbp mediates transcriptional activity. The sequence is that of Transcription initiation factor IIA subunit 1 (gtf2a1) from Dictyostelium discoideum (Social amoeba).